Here is an 86-residue protein sequence, read N- to C-terminus: YcgL domain-containing protein XCV4171 (86 aa).

Positions 1–83 (MHAYVYKSQR…PKTIVLAGEC (83 aa)) constitute a YcgL domain.

This Xanthomonas euvesicatoria pv. vesicatoria (strain 85-10) (Xanthomonas campestris pv. vesicatoria) protein is YcgL domain-containing protein XCV4171.